The sequence spans 484 residues: Putative myrosinase 6 (484 aa).

N28 carries an N-linked (GlcNAc...) asparagine glycan. Residues Q39, H140, and 184 to 185 (NQ) each bind a beta-D-glucoside. The cysteines at positions 204 and 207 are disulfide-linked. An N-linked (GlcNAc...) asparagine glycan is attached at N260. Residues Y321, W440, 447-448 (EF), and F456 each bind a beta-D-glucoside. N-linked (GlcNAc...) asparagine glycosylation is present at N462.

It belongs to the glycosyl hydrolase 1 family.

It catalyses the reaction a thioglucoside + H2O = a sugar + a thiol.. This chain is Putative myrosinase 6, found in Arabidopsis thaliana (Mouse-ear cress).